The primary structure comprises 379 residues: Alanine racemase (379 aa).

The active-site Proton acceptor; specific for D-alanine is K37. At K37 the chain carries N6-(pyridoxal phosphate)lysine. Residue R137 participates in substrate binding. The active-site Proton acceptor; specific for L-alanine is Y269. M317 is a substrate binding site.

This sequence belongs to the alanine racemase family. It depends on pyridoxal 5'-phosphate as a cofactor.

It catalyses the reaction L-alanine = D-alanine. Its pathway is amino-acid biosynthesis; D-alanine biosynthesis; D-alanine from L-alanine: step 1/1. Catalyzes the interconversion of L-alanine and D-alanine. May also act on other amino acids. The protein is Alanine racemase (alr) of Geobacter sp. (strain M21).